The following is a 307-amino-acid chain: Oxygen-dependent coproporphyrinogen-III oxidase (307 aa).

Serine 99 provides a ligand contact to substrate. A divalent metal cation is bound by residues histidine 103 and histidine 113. The active-site Proton donor is histidine 113. Position 115 to 117 (115 to 117 (NVR)) interacts with substrate. 2 residues coordinate a divalent metal cation: histidine 152 and histidine 182. The important for dimerization stretch occupies residues 247–282 (YVEFNLVFDRGTLFGLQSGGRTESILMSMPPVANWR). Position 265 to 267 (265 to 267 (GGR)) interacts with substrate.

It belongs to the aerobic coproporphyrinogen-III oxidase family. Homodimer. A divalent metal cation serves as cofactor.

It localises to the cytoplasm. It catalyses the reaction coproporphyrinogen III + O2 + 2 H(+) = protoporphyrinogen IX + 2 CO2 + 2 H2O. It participates in porphyrin-containing compound metabolism; protoporphyrin-IX biosynthesis; protoporphyrinogen-IX from coproporphyrinogen-III (O2 route): step 1/1. Functionally, involved in the heme biosynthesis. Catalyzes the aerobic oxidative decarboxylation of propionate groups of rings A and B of coproporphyrinogen-III to yield the vinyl groups in protoporphyrinogen-IX. The polypeptide is Oxygen-dependent coproporphyrinogen-III oxidase (Burkholderia cenocepacia (strain ATCC BAA-245 / DSM 16553 / LMG 16656 / NCTC 13227 / J2315 / CF5610) (Burkholderia cepacia (strain J2315))).